The chain runs to 229 residues: Large ribosomal subunit protein bL25 (229 aa).

2 disordered regions span residues 1 to 21 and 182 to 229; these read MDII…ASSR and NAPE…KDKK. Residues 195 to 222 are compositionally biased toward low complexity; it reads PAAGAPAAGAAAAPAAGAAAPAKGAAPA.

Belongs to the bacterial ribosomal protein bL25 family. CTC subfamily. In terms of assembly, part of the 50S ribosomal subunit; part of the 5S rRNA/L5/L18/L25 subcomplex. Contacts the 5S rRNA. Binds to the 5S rRNA independently of L5 and L18.

This is one of the proteins that binds to the 5S RNA in the ribosome where it forms part of the central protuberance. The polypeptide is Large ribosomal subunit protein bL25 (Sorangium cellulosum (strain So ce56) (Polyangium cellulosum (strain So ce56))).